Reading from the N-terminus, the 318-residue chain is Olfactory receptor 2T34 (318 aa).

The Extracellular portion of the chain corresponds to 1–30 (MCSGNQTSQNQTASTDFTLTGLFAESKHAA). 2 N-linked (GlcNAc...) asparagine glycosylation sites follow: N5 and N10. Residues 31–54 (LLYTVTFLLFLMALTGNALLILLI) traverse the membrane as a helical segment. Residues 55–62 (HSEPRLHT) are Cytoplasmic-facing. The chain crosses the membrane as a helical span at residues 63 to 84 (PMYFFISQLALMDLMYLCVTVP). Over 85 to 105 (KMLVGQVTGDDTISPSGCGIQ) the chain is Extracellular. An intrachain disulfide couples C102 to C194. Residues 106-125 (MFFHLTLAGAEVFLLAAMAY) form a helical membrane-spanning segment. Residues 126–144 (DRYAAVCRPLHYPLLMNQR) are Cytoplasmic-facing. The chain crosses the membrane as a helical span at residues 145–163 (VCQLLVSACWVLGMVDGLL). The Extracellular segment spans residues 164–200 (LTPITMSFPFCQSRKILSFFCETPALLKLSCSDVSLY). Residues 201–224 (KMLTYLCCILMLLTPIMVISSSYT) form a helical membrane-spanning segment. The Cytoplasmic portion of the chain corresponds to 225 to 241 (LILHLIHRMNSAAGRRK). The chain crosses the membrane as a helical span at residues 242 to 264 (ALATCSSHMIIVLLLFGASFYTY). The Extracellular portion of the chain corresponds to 265-277 (MLRSSYHTAEQDM). A helical membrane pass occupies residues 278-297 (MVSAFYTIFTPVLNPLIYSL). Topologically, residues 298-318 (RNKDVTRALRSMMQSRMNQEK) are cytoplasmic.

This sequence belongs to the G-protein coupled receptor 1 family.

Its subcellular location is the cell membrane. Functionally, odorant receptor. The chain is Olfactory receptor 2T34 (OR2T34) from Homo sapiens (Human).